Consider the following 595-residue polypeptide: Putative terpenoid synthase 16 (595 aa).

4 residues coordinate Mg(2+): aspartate 349, aspartate 353, asparagine 494, and aspartate 502. The short motif at 349-353 is the DDXXD motif element; sequence DDTCD.

The protein belongs to the terpene synthase family. Tpsa subfamily. Requires Mg(2+) as cofactor. The cofactor is Mn(2+).

The protein resides in the cytoplasm. It functions in the pathway secondary metabolite biosynthesis; terpenoid biosynthesis. The polypeptide is Putative terpenoid synthase 16 (TPS16) (Arabidopsis thaliana (Mouse-ear cress)).